The chain runs to 416 residues: Adenylosuccinate synthetase (416 aa).

GTP contacts are provided by residues 13-19 (GDEGKGK) and 41-43 (GHT). The active-site Proton acceptor is the aspartate 14. Residues aspartate 14 and glycine 41 each contribute to the Mg(2+) site. IMP contacts are provided by residues 14-17 (DEGK), 39-42 (NAGH), threonine 126, arginine 140, glutamine 220, threonine 235, and arginine 299. The active-site Proton donor is histidine 42. A substrate-binding site is contributed by 295–301 (TTTGRKR). GTP contacts are provided by residues arginine 301, 327–329 (KLD), and 405–407 (STS).

This sequence belongs to the adenylosuccinate synthetase family. Homodimer. It depends on Mg(2+) as a cofactor.

It localises to the cytoplasm. The catalysed reaction is IMP + L-aspartate + GTP = N(6)-(1,2-dicarboxyethyl)-AMP + GDP + phosphate + 2 H(+). Its pathway is purine metabolism; AMP biosynthesis via de novo pathway; AMP from IMP: step 1/2. In terms of biological role, plays an important role in the de novo pathway of purine nucleotide biosynthesis. Catalyzes the first committed step in the biosynthesis of AMP from IMP. This Campylobacter hominis (strain ATCC BAA-381 / DSM 21671 / CCUG 45161 / LMG 19568 / NCTC 13146 / CH001A) protein is Adenylosuccinate synthetase.